The sequence spans 349 residues: N-acetyltaurine hydrolase (349 aa).

The a divalent metal cation site is built by His-26, His-28, Glu-169, His-201, His-230, and Asp-298.

Belongs to the metallo-dependent hydrolases superfamily. Phosphotriesterase family. The cofactor is a divalent metal cation.

Its subcellular location is the cytoplasm. The protein resides in the cytosol. The enzyme catalyses N-acetyltaurine + H2O = taurine + acetate. It carries out the reaction N-propanoyltaurine + H2O = propanoate + taurine. It catalyses the reaction N-acetyl-L-methionine + H2O = L-methionine + acetate. The catalysed reaction is N-acetyl-L-isoleucine + H2O = L-isoleucine + acetate. The enzyme catalyses N-acetyl-L-leucine + H2O = L-leucine + acetate. It carries out the reaction N-acetyl-L-valine + H2O = L-valine + acetate. N-acetyltaurine hydrolase that regulates feeding by catalyzing the hydrolysis of N-acetyltaurine into taurine and acetate. N-acetyltaurine has anorexigenic and anti-obesity effects that are dependent on GFRAL receptor and GDF15. PTER also acts on other N-acetyl amino acids (Met, Ile, Leu, Val) and N-propionyltaurine, but at lower rates. The polypeptide is N-acetyltaurine hydrolase (Homo sapiens (Human)).